Consider the following 547-residue polypeptide: Membrane transporter D1 (547 aa).

The Cytoplasmic segment spans residues 1–2 (MR). The helical transmembrane segment at 3-25 (ASVMLCAALGGFLFGYDTGVINA) threads the bilayer. Over 26–43 (ALFQMKDHFGFSEHSWQY) the chain is Extracellular. The chain crosses the membrane as a helical span at residues 44 to 64 (ALIVAIAIAGAFVGAFISGFI). Residues 65-78 (SAAFGRRPCIAVAD) lie on the Cytoplasmic side of the membrane. A helical membrane pass occupies residues 79–99 (ALFVIGSVLMGAAPNVEVVLV). Over 100-101 (SR) the chain is Extracellular. A helical membrane pass occupies residues 102–122 (VIVGLAIGISSATIPVYLAEV). Residues 123-136 (TSPKHRGATIVLNN) are Cytoplasmic-facing. Residues 137–157 (LFLTGGQFVAAGFTAIMVVFT) traverse the membrane as a helical segment. Residues 158-164 (SKNIGWR) are Extracellular-facing. Residues 165-185 (VAIGIGALPAVVQAFCLLFFL) traverse the membrane as a helical segment. The Cytoplasmic segment spans residues 186–245 (PESPRWLLSKGHADRAKAVADKFEVDLCEFQEGDELPSVRIDYRPLMARDMRFRVVLSSG). Residues 246–266 (LQIIQQFSGINTIMYYSSVIL) traverse the membrane as a helical segment. Topologically, residues 267–276 (YDAGFRDAIM) are extracellular. The helical transmembrane segment at 277 to 297 (PVVLSIPLAFMNALFTAVAIF) threads the bilayer. Residues 298–308 (TVDRFGRRRML) are Cytoplasmic-facing. Residues 309-329 (LISVFGCLVLLVVIAIIGFFI) form a helical membrane-spanning segment. The Extracellular segment spans residues 330-339 (GTRISYSVGG). A helical transmembrane segment spans residues 340–360 (GLFLALLAVFLALYAPGIGCI). The Cytoplasmic portion of the chain corresponds to 361–385 (PWVIMGEIFPTHLRTSAASVATMAN). A helical transmembrane segment spans residues 386–406 (WGANVLVSQVFPILMGAIGVG). Residue Gly-407 is a topological domain, extracellular. Residues 408 to 428 (TFTIISGLMALGCIFVYFFAV) form a helical membrane-spanning segment. The Cytoplasmic segment spans residues 429–547 (ETKGLTLEQI…AIKAAPHEPK (119 aa)). Disordered stretches follow at residues 449 to 468 (PPRF…YRED) and 510 to 547 (VSNK…HEPK). The segment covering 519-529 (TSSSSDPQSLE) has biased composition (polar residues).

This sequence belongs to the major facilitator superfamily. Sugar transporter (TC 2.A.1.1) family.

The protein localises to the membrane. This is Membrane transporter D1 from Leishmania donovani.